We begin with the raw amino-acid sequence, 900 residues long: UPF0182 protein Ppro_3567 (900 aa).

A run of 7 helical transmembrane segments spans residues 15–35, 60–80, 112–132, 174–194, 210–230, 257–277, and 282–302; these read FFPLLILVSVLLSLISYLLNL, GAGLLFGGLLFLFVQINLHVA, VSMLVSFVLALLAGNLGAMKW, FIILAAAALATAVYYVRGGIL, LAVLVGIFACAVAAGFYLDSF, VLTFLTPLAGAMLAIGIWKGV, and LLAPAIVVALYMLGIRVYPGV.

The protein belongs to the UPF0182 family.

The protein resides in the cell membrane. This Pelobacter propionicus (strain DSM 2379 / NBRC 103807 / OttBd1) protein is UPF0182 protein Ppro_3567.